A 495-amino-acid polypeptide reads, in one-letter code: Trigger factor (495 aa).

One can recognise a PPIase FKBP-type domain in the interval 169–254; that stretch reads GDRVAMDYVG…VKDVAAPGAV (86 aa). Residues 441–495 form a disordered region; that stretch reads LAEDEGEAKAETKKAAPKKKAAAKTEAAEAGEGEEAAAPKKKAAPKKKAADESAE.

Belongs to the FKBP-type PPIase family. Tig subfamily.

The protein localises to the cytoplasm. It carries out the reaction [protein]-peptidylproline (omega=180) = [protein]-peptidylproline (omega=0). Functionally, involved in protein export. Acts as a chaperone by maintaining the newly synthesized protein in an open conformation. Functions as a peptidyl-prolyl cis-trans isomerase. The sequence is that of Trigger factor from Rhizobium etli (strain CIAT 652).